A 393-amino-acid polypeptide reads, in one-letter code: NAD(P)H-quinone oxidoreductase subunit H, chloroplastic (393 aa).

This sequence belongs to the complex I 49 kDa subunit family. As to quaternary structure, NDH is composed of at least 16 different subunits, 5 of which are encoded in the nucleus.

The protein localises to the plastid. It is found in the chloroplast thylakoid membrane. It carries out the reaction a plastoquinone + NADH + (n+1) H(+)(in) = a plastoquinol + NAD(+) + n H(+)(out). The enzyme catalyses a plastoquinone + NADPH + (n+1) H(+)(in) = a plastoquinol + NADP(+) + n H(+)(out). Functionally, NDH shuttles electrons from NAD(P)H:plastoquinone, via FMN and iron-sulfur (Fe-S) centers, to quinones in the photosynthetic chain and possibly in a chloroplast respiratory chain. The immediate electron acceptor for the enzyme in this species is believed to be plastoquinone. Couples the redox reaction to proton translocation, and thus conserves the redox energy in a proton gradient. This Oenothera argillicola (Appalachian evening primrose) protein is NAD(P)H-quinone oxidoreductase subunit H, chloroplastic.